A 314-amino-acid polypeptide reads, in one-letter code: GTPase Era (314 aa).

An Era-type G domain is found at 21–189; it reads KSGFVGIIGR…QNTLIEQLEP (169 aa). Positions 29–36 are G1; that stretch reads GRPNVGKS. 29-36 provides a ligand contact to GTP; sequence GRPNVGKS. Residues 55–59 are G2; that stretch reads QTTRN. The tract at residues 76-79 is G3; it reads DTPG. GTP is bound by residues 76 to 80 and 138 to 141; these read DTPGI and NKSD. Positions 138–141 are G4; the sequence is NKSD. The segment at 168-170 is G5; sequence FSA. One can recognise a KH type-2 domain in the interval 212 to 296; that stretch reads IREQILQLTR…FLKLFVKVEP (85 aa).

It belongs to the TRAFAC class TrmE-Era-EngA-EngB-Septin-like GTPase superfamily. Era GTPase family. In terms of assembly, monomer.

It is found in the cytoplasm. It localises to the cell inner membrane. Functionally, an essential GTPase that binds both GDP and GTP, with rapid nucleotide exchange. Plays a role in 16S rRNA processing and 30S ribosomal subunit biogenesis and possibly also in cell cycle regulation and energy metabolism. The sequence is that of GTPase Era from Crocosphaera subtropica (strain ATCC 51142 / BH68) (Cyanothece sp. (strain ATCC 51142)).